The following is a 137-amino-acid chain: Holo-[acyl-carrier-protein] synthase (137 aa).

The Mg(2+) site is built by Asp-8 and Glu-57.

This sequence belongs to the P-Pant transferase superfamily. AcpS family. Requires Mg(2+) as cofactor.

The protein localises to the cytoplasm. The catalysed reaction is apo-[ACP] + CoA = holo-[ACP] + adenosine 3',5'-bisphosphate + H(+). Transfers the 4'-phosphopantetheine moiety from coenzyme A to a Ser of acyl-carrier-protein. This is Holo-[acyl-carrier-protein] synthase from Cereibacter sphaeroides (strain ATCC 17029 / ATH 2.4.9) (Rhodobacter sphaeroides).